Here is a 422-residue protein sequence, read N- to C-terminus: Mitochondrial distribution and morphology protein 12 (422 aa).

In terms of domain architecture, SMP-LTD spans 1-386 (MSFDINWNQL…WPSWICIDMN (386 aa)). 2 disordered regions span residues 74–134 (GATN…HDLG) and 387–422 (DDGD…THEV). Acidic residues-rich tracts occupy residues 109 to 130 (FDDD…EYDD) and 387 to 401 (DDGD…EDSN). Over residues 405–422 (GDGKDNDGKHGDGPTHEV) the composition is skewed to basic and acidic residues.

This sequence belongs to the MDM12 family. Component of the ER-mitochondria encounter structure (ERMES) or MDM complex, composed of MMM1, MDM10, MDM12 and MDM34. An MMM1 homodimer associates with one molecule of MDM12 on each side in a pairwise head-to-tail manner, and the SMP-LTD domains of MMM1 and MDM12 generate a continuous hydrophobic tunnel for phospholipid trafficking.

The protein localises to the mitochondrion outer membrane. It is found in the endoplasmic reticulum membrane. In terms of biological role, component of the ERMES/MDM complex, which serves as a molecular tether to connect the endoplasmic reticulum (ER) and mitochondria. Components of this complex are involved in the control of mitochondrial shape and protein biogenesis, and function in nonvesicular lipid trafficking between the ER and mitochondria. MDM12 is required for the interaction of the ER-resident membrane protein MMM1 and the outer mitochondrial membrane-resident beta-barrel protein MDM10. The MDM12-MMM1 subcomplex functions in the major beta-barrel assembly pathway that is responsible for biogenesis of all mitochondrial outer membrane beta-barrel proteins, and acts in a late step after the SAM complex. The MDM10-MDM12-MMM1 subcomplex further acts in the TOM40-specific pathway after the action of the MDM12-MMM1 complex. Essential for establishing and maintaining the structure of mitochondria and maintenance of mtDNA nucleoids. The sequence is that of Mitochondrial distribution and morphology protein 12 from Candida dubliniensis (strain CD36 / ATCC MYA-646 / CBS 7987 / NCPF 3949 / NRRL Y-17841) (Yeast).